Reading from the N-terminus, the 402-residue chain is MQVVSRRLVQRPLVGGASIYSSSSLRSLYGVSNHLNGTDNCRYSSSLATKGVGHLARKGTGGRSSVSGIVATVFGATGFLGRYLVQQLAKMGSQVLVPFRGSEDSPRHLKLMGDLGQVVPMKFDPRDEDSIKAVMAKANVVINLIGREYETRNFSFEDANHHIAEKLALVAKEHGGIMRYIQVSCLGASVSSPSRMLRAKAAAEEAVLNALPEATIMRPATMIGTEDRILNPWSMFVKKYGFLPLIGGGTTKFQPVYVVDVAAAIVAALKDDGSSMGKTYELGGPDVFTTHELAEIMYDMIREWPRYVKLPFPIAKAMAAPRDFMVNKVPFPLPSPQIFNLDQINALTTDTLVSDNALKFQDLDLVPHKLKGYPVEFLIQYRKGGPNFGSTVSEKIPTDFYP.

The transit peptide at 1-43 directs the protein to the mitochondrion; sequence MQVVSRRLVQRPLVGGASIYSSSSLRSLYGVSNHLNGTDNCRY.

It belongs to the complex I NDUFA9 subunit family. As to quaternary structure, complex I is composed of at least 49 different subunits. This a component of the hydrophobic protein fraction. Requires FAD as cofactor.

Its subcellular location is the mitochondrion matrix. Accessory subunit of the mitochondrial membrane respiratory chain NADH dehydrogenase (Complex I), that is believed not to be involved in catalysis. Complex I functions in the transfer of electrons from NADH to the respiratory chain. The immediate electron acceptor for the enzyme is believed to be ubiquinone. The protein is NADH dehydrogenase [ubiquinone] 1 alpha subcomplex subunit 9, mitochondrial of Arabidopsis thaliana (Mouse-ear cress).